Here is a 103-residue protein sequence, read N- to C-terminus: Histone H4.1 (103 aa).

Gly residues predominate over residues Met-1–Gly-14. The tract at residues Met-1 to Arg-20 is disordered. Lys-6 carries the post-translational modification N6-acetyl-N6-methyllysine; alternate. An N6-methyllysine; alternate mark is found at Lys-6, Lys-9, and Lys-13. Lys-13 carries the N6-acetyl-N6-methyllysine; alternate modification. Residues Lys-17–Lys-21 mediate DNA binding. The residue at position 92 (Lys-92) is an N6-glutaryllysine.

The protein belongs to the histone H4 family. The nucleosome is a histone octamer containing two molecules each of H2A, H2B, H3 and H4 assembled in one H3-H4 heterotetramer and two H2A-H2B heterodimers. The octamer wraps approximately 147 bp of DNA. Post-translationally, glutarylation at Lys-92 (H4K91glu) destabilizes nucleosomes by promoting dissociation of the H2A-H2B dimers from nucleosomes.

It localises to the nucleus. Its subcellular location is the chromosome. Core component of nucleosome. Nucleosomes wrap and compact DNA into chromatin, limiting DNA accessibility to the cellular machineries which require DNA as a template. Histones thereby play a central role in transcription regulation, DNA repair, DNA replication and chromosomal stability. DNA accessibility is regulated via a complex set of post-translational modifications of histones, also called histone code, and nucleosome remodeling. This Eremothecium gossypii (strain ATCC 10895 / CBS 109.51 / FGSC 9923 / NRRL Y-1056) (Yeast) protein is Histone H4.1 (HHF1).